The following is a 319-amino-acid chain: 4-diphosphocytidyl-2-C-methyl-D-erythritol kinase (319 aa).

Lys-21 is a catalytic residue. An ATP-binding site is contributed by 106 to 116 (PIGAGLAGGSS). Residue Asp-148 is part of the active site.

Belongs to the GHMP kinase family. IspE subfamily.

It carries out the reaction 4-CDP-2-C-methyl-D-erythritol + ATP = 4-CDP-2-C-methyl-D-erythritol 2-phosphate + ADP + H(+). Its pathway is isoprenoid biosynthesis; isopentenyl diphosphate biosynthesis via DXP pathway; isopentenyl diphosphate from 1-deoxy-D-xylulose 5-phosphate: step 3/6. Functionally, catalyzes the phosphorylation of the position 2 hydroxy group of 4-diphosphocytidyl-2C-methyl-D-erythritol. The protein is 4-diphosphocytidyl-2-C-methyl-D-erythritol kinase of Prochlorococcus marinus (strain MIT 9313).